Consider the following 316-residue polypeptide: Transaldolase A (316 aa).

Residue K131 is the Schiff-base intermediate with substrate of the active site.

The protein belongs to the transaldolase family. Type 1 subfamily. Homodimer.

It is found in the cytoplasm. It carries out the reaction D-sedoheptulose 7-phosphate + D-glyceraldehyde 3-phosphate = D-erythrose 4-phosphate + beta-D-fructose 6-phosphate. It participates in carbohydrate degradation; pentose phosphate pathway; D-glyceraldehyde 3-phosphate and beta-D-fructose 6-phosphate from D-ribose 5-phosphate and D-xylulose 5-phosphate (non-oxidative stage): step 2/3. In terms of biological role, transaldolase is important for the balance of metabolites in the pentose-phosphate pathway. This chain is Transaldolase A (talA), found in Escherichia coli O157:H7.